The primary structure comprises 72 residues: PI-stichotoxin-Hmg3d (72 aa).

An N-terminal signal peptide occupies residues 1 to 14; sequence GFYFRSIQGFYFKR. Positions 20–70 constitute a BPTI/Kunitz inhibitor domain; that stretch reads CSEPKKVGRCRGSFPRFYFDSETGKCTPFIYGGCGGNGNNFETLRRCRAIC. 3 cysteine pairs are disulfide-bonded: cysteine 20-cysteine 70, cysteine 29-cysteine 53, and cysteine 45-cysteine 66.

It belongs to the venom Kunitz-type family. Sea anemone type 2 potassium channel toxin subfamily.

It is found in the secreted. The protein resides in the nematocyst. Functionally, serine protease inhibitor that inhibits trypsin (Ki=50 nM). This protease exhibits a pronounced neuroprotective activity on Alzheimer's disease model. It enhances cell viability by 39.4% when neuroblastoma cells are in presence of the toxin component beta-amyloid, but has no effect when these cells are in presence of 6-OHDA. It induces an effective decrease of reactive oxygen species (ROS) level in the cells treated with oxidative stress inducers. It also protects these cells by inhibiting ATP-induced purinoceptor activation. Its binding affinity to P2RX7 is moderate (Kd=43.3 uM). This chain is PI-stichotoxin-Hmg3d, found in Heteractis magnifica (Magnificent sea anemone).